An 874-amino-acid chain; its full sequence is Ectonucleotide pyrophosphatase/phosphodiesterase family member 3 (874 aa).

Residues 1–11 (MQSTLNLSTEE) lie on the Cytoplasmic side of the membrane. A helical; Signal-anchor for type II membrane protein membrane pass occupies residues 12 to 30 (PVKRNTVKKYKIICIVLLI). The Extracellular portion of the chain corresponds to 31-874 (LLVAVSLALG…TYLPVFETVI (844 aa)). SMB domains lie at 50-93 (EQGS…VQST) and 94-138 (QIWT…GETS). Intrachain disulfides connect cysteine 54-cysteine 71, cysteine 58-cysteine 89, cysteine 69-cysteine 82, cysteine 75-cysteine 81, cysteine 98-cysteine 115, cysteine 103-cysteine 133, cysteine 113-cysteine 126, cysteine 119-cysteine 125, cysteine 144-cysteine 190, and cysteine 152-cysteine 364. The short motif at 78–80 (RGD) is the Cell attachment site element. The phosphodiesterase stretch occupies residues 160-544 (PVILFSMDGF…HGSLNHLLKV (385 aa)). Zn(2+) is bound at residue aspartate 167. Lysine 204 is a binding site for ATP. Threonine 205 is a Zn(2+) binding site. Threonine 205 serves as the catalytic Nucleophile. Asparagine 226 serves as a coordination point for ATP. Asparagine 236 is a glycosylation site (N-linked (GlcNAc...) asparagine). Aspartate 275 lines the ATP pocket. Asparagine 279 is a glycosylation site (N-linked (GlcNAc...) asparagine). Position 289 (tyrosine 289) interacts with ATP. A glycan (N-linked (GlcNAc...) asparagine) is linked at asparagine 290. Zn(2+)-binding residues include aspartate 325, histidine 329, aspartate 372, and histidine 373. 6 disulfides stabilise this stretch: cysteine 380-cysteine 477, cysteine 428-cysteine 817, cysteine 561-cysteine 622, cysteine 574-cysteine 678, cysteine 576-cysteine 663, and cysteine 786-cysteine 796. N-linked (GlcNAc...) asparagine glycosylation occurs at asparagine 425. Position 482 (histidine 482) interacts with Zn(2+). The N-linked (GlcNAc...) asparagine glycan is linked to asparagine 532. The segment at 581–874 (TNSDLERVNQ…TYLPVFETVI (294 aa)) is nuclease. Residues asparagine 677, asparagine 686, and asparagine 698 are each glycosylated (N-linked (GlcNAc...) asparagine). Aspartate 751, aspartate 755, histidine 757, and aspartate 759 together coordinate Ca(2+). 3 N-linked (GlcNAc...) asparagine glycosylation sites follow: asparagine 770, asparagine 788, and asparagine 820.

It belongs to the nucleotide pyrophosphatase/phosphodiesterase family. As to quaternary structure, monomer and homodimer. The cofactor is Zn(2+). In terms of processing, N-glycosylated. N-glycosylation is necessary for normal transport to the cell membrane, but is not the apical targeting signal.

It localises to the cell membrane. The protein localises to the apical cell membrane. It is found in the secreted. The enzyme catalyses a ribonucleoside 5'-triphosphate + H2O = a ribonucleoside 5'-phosphate + diphosphate + H(+). The catalysed reaction is ATP + H2O = AMP + diphosphate + H(+). It catalyses the reaction CTP + H2O = CMP + diphosphate + H(+). It carries out the reaction GTP + H2O = GMP + diphosphate + H(+). The enzyme catalyses UTP + H2O = UMP + diphosphate + H(+). The catalysed reaction is UDP-N-acetyl-alpha-D-glucosamine + H2O = N-acetyl-alpha-D-glucosamine 1-phosphate + UMP + 2 H(+). It catalyses the reaction P(1),P(3)-bis(5'-adenosyl) triphosphate + H2O = AMP + ADP + 2 H(+). It carries out the reaction P(1),P(4)-bis(5'-adenosyl) tetraphosphate + H2O = AMP + ATP + 2 H(+). The enzyme catalyses P(1),P(5)-bis(5'-adenosyl) pentaphosphate + H2O = adenosine 5'-tetraphosphate + AMP + 2 H(+). The catalysed reaction is P(1),P(4)-bis(5'-guanosyl) tetraphosphate + H2O = GMP + GTP + 2 H(+). It catalyses the reaction Hydrolytically removes 5'-nucleotides successively from the 3'-hydroxy termini of 3'-hydroxy-terminated oligonucleotides.. Hydrolase that metabolizes extracellular nucleotides, including ATP, GTP, UTP and CTP. Limits mast cells and basophils response during inflammation and during the chronic phases of allergic responses by eliminating extracellular ATP, a signaling molecule activating these cells in an autocrine manner. Metabolizes extracellular ATP in the lumen of the small intestine, and thereby prevents ATP-induced apoptosis of intestinal plasmacytoid dendritic cells. Has a broad specificity and can also hydrolyze UDP-GlcNAc into UMP and GlcNAc-1-phosphate and potentially several other intracellular nucleotide sugars, including UDP-GalNAc, CMP-NeuAc, GDP-Fuc, and UDP-GlcA. Thereby, could modulate glycan biosynthesis and protein glycosylation. Can hydrolyze extracellular dinucleoside polyphosphates, including the vasoactive adenosine polyphosphates as well. In addition, displays an alkaline phosphodiesterase activity in vitro. This chain is Ectonucleotide pyrophosphatase/phosphodiesterase family member 3 (ENPP3), found in Bos taurus (Bovine).